Reading from the N-terminus, the 234-residue chain is UPF0758 protein Smlt0399 (234 aa).

Residues 103–225 (VGNNPAAVGR…PVSFAERGLL (123 aa)) form the MPN domain. Residues His-174, His-176, and Asp-187 each coordinate Zn(2+). The short motif at 174–187 (HNHPSGDPEPSSAD) is the JAMM motif element.

It belongs to the UPF0758 family.

This chain is UPF0758 protein Smlt0399, found in Stenotrophomonas maltophilia (strain K279a).